The following is a 209-amino-acid chain: MKTSKWIDISQPLNNDIATWPGDTPFSYEVLWSKEESGSVNVGKLTMSIHTGTHIDAPFHFDNDGKKVLDLDIQVYVGPTRIIDVSNLESIGKKELEKFHLEGVERLLLRTSSHGKANEFPDIIPHLRADIAPFLSEKGIRLIGVDVPSVDPLDDKELAAHHQLFKHSIHILENVVLDHVADGDYELIALPLALSDADGSPVRAVIRPI.

W20 lines the substrate pocket. Positions 50, 54, and 56 each coordinate Zn(2+). H60 acts as the Proton donor/acceptor in catalysis. Zn(2+)-binding residues include H161 and E173.

It belongs to the Cyclase 1 superfamily. KynB family. As to quaternary structure, homodimer. Requires Zn(2+) as cofactor.

The enzyme catalyses N-formyl-L-kynurenine + H2O = L-kynurenine + formate + H(+). It participates in amino-acid degradation; L-tryptophan degradation via kynurenine pathway; L-kynurenine from L-tryptophan: step 2/2. Catalyzes the hydrolysis of N-formyl-L-kynurenine to L-kynurenine, the second step in the kynurenine pathway of tryptophan degradation. The chain is Kynurenine formamidase from Bacillus anthracis.